Reading from the N-terminus, the 393-residue chain is Sulfate adenylyltransferase (393 aa).

The protein belongs to the sulfate adenylyltransferase family.

It carries out the reaction sulfate + ATP + H(+) = adenosine 5'-phosphosulfate + diphosphate. It participates in sulfur metabolism; hydrogen sulfide biosynthesis; sulfite from sulfate: step 1/3. This Synechococcus sp. (strain JA-3-3Ab) (Cyanobacteria bacterium Yellowstone A-Prime) protein is Sulfate adenylyltransferase.